The sequence spans 291 residues: Omega-amidase NIT3 (291 aa).

In terms of domain architecture, CN hydrolase spans 11–264 (IKVALVQLSG…EEIIYAELDP (254 aa)). The residue at position 34 (threonine 34) is a Phosphothreonine. The Proton acceptor role is filled by glutamate 53. Lysine 128 serves as the catalytic Proton donor. Cysteine 169 functions as the Nucleophile in the catalytic mechanism.

It belongs to the carbon-nitrogen hydrolase superfamily. NIT1/NIT2 family. In terms of assembly, homodimer.

The enzyme catalyses a monoamide of a dicarboxylate + H2O = a dicarboxylate + NH4(+). Possesses omega-amidase activity. The role of omega-amidase is to remove potentially toxic intermediates by converting 2-oxoglutaramate and 2-oxosuccinamate to biologically useful 2-oxoglutarate and oxaloacetate, respectively. This is Omega-amidase NIT3 (NIT3) from Saccharomyces cerevisiae (strain ATCC 204508 / S288c) (Baker's yeast).